The chain runs to 328 residues: MSLIKIDQKAYEYNLRHIAKKIGSFQRLICVFKDNAYGHGAKLLAPLAKNLGVSFVAVKSEEEAREIEEFFENILILSHRPHGNENSRFIYALNDISQVKNYKQDIKIHLKIDTGMHRNGICVENLEHAIDLIRSSNLKLTGMFTHFASADEMDGSFFVQKENFQKAKKMVKKYFSNLLFHSHNSAALFRGKIPEDEYCRIGLVQFGYGDSNLKRILSLYAHRLSQRILQKGQSIGYGGIFTAVKDMEVATYDLGYADGLFRYNGKGELVLGNGKAMLGKMSMDSFSCENSGEEICVFKDADIWADFFHTINYEILVKLNPNIQRVLV.

Lysine 33 (proton acceptor; specific for D-alanine) is an active-site residue. N6-(pyridoxal phosphate)lysine is present on lysine 33. A substrate-binding site is contributed by arginine 118. The active-site Proton acceptor; specific for L-alanine is the tyrosine 237. Methionine 283 is a substrate binding site.

It belongs to the alanine racemase family. The cofactor is pyridoxal 5'-phosphate.

It catalyses the reaction L-alanine = D-alanine. The protein operates within amino-acid biosynthesis; D-alanine biosynthesis; D-alanine from L-alanine: step 1/1. Catalyzes the interconversion of L-alanine and D-alanine. May also act on other amino acids. The protein is Alanine racemase (alr) of Campylobacter jejuni subsp. doylei (strain ATCC BAA-1458 / RM4099 / 269.97).